The primary structure comprises 324 residues: Phospho-N-acetylmuramoyl-pentapeptide-transferase (324 aa).

9 consecutive transmembrane segments (helical) span residues 5-25, 51-71, 77-97, 117-137, 147-167, 176-196, 203-223, 227-248, and 302-322; these read VILFTIIMGFLISVLLSPIFI, TPTMGGIMIIFSITITTIVMI, ISPEMFLLLFVTLGYGLLGFL, LIGQIVIAVIFYAVFHYYQFA, VSFDLGWAYFILVVFMLVGGS, LDGLLSGTAAIAFGAFAILAW, VAIFSVAVAGAVLGFLVFNAH, VFMGDTGSLALGGAIVAIAILT, and VVVTFWTAGLLLAVLGIYIEV.

It belongs to the glycosyltransferase 4 family. MraY subfamily. Requires Mg(2+) as cofactor.

It localises to the cell membrane. The enzyme catalyses UDP-N-acetyl-alpha-D-muramoyl-L-alanyl-gamma-D-glutamyl-meso-2,6-diaminopimeloyl-D-alanyl-D-alanine + di-trans,octa-cis-undecaprenyl phosphate = di-trans,octa-cis-undecaprenyl diphospho-N-acetyl-alpha-D-muramoyl-L-alanyl-D-glutamyl-meso-2,6-diaminopimeloyl-D-alanyl-D-alanine + UMP. Its pathway is cell wall biogenesis; peptidoglycan biosynthesis. In terms of biological role, catalyzes the initial step of the lipid cycle reactions in the biosynthesis of the cell wall peptidoglycan: transfers peptidoglycan precursor phospho-MurNAc-pentapeptide from UDP-MurNAc-pentapeptide onto the lipid carrier undecaprenyl phosphate, yielding undecaprenyl-pyrophosphoryl-MurNAc-pentapeptide, known as lipid I. This Bacillus pumilus (strain SAFR-032) protein is Phospho-N-acetylmuramoyl-pentapeptide-transferase.